The primary structure comprises 707 residues: Lipase maturation factor 2 (707 aa).

10 helical membrane-spanning segments follow: residues 10–30 (AFLW…YVQI), 78–98 (MELI…FSCL), 102–122 (LVFL…QVFL), 126–146 (WDSL…LHAM), 158–178 (GVTF…SGVV), 220–240 (FSVV…FLPF), 256–276 (ILII…VLCC), 309–329 (LVSL…VKYF), 358–378 (ITFP…LKGM), and 395–415 (LQWL…LVPY). N-linked (GlcNAc...) asparagine glycosylation occurs at N483. The helical transmembrane segment at 634-654 (LLLHSFIFGIFTIYFLQAMFG) threads the bilayer. The segment at 661 to 707 (VAKQRHSMPPNEKKKQKPNSGQGESASSKSSGHGTDTVRRNKKNEKS) is disordered. Positions 680 to 694 (SGQGESASSKSSGHG) are enriched in low complexity. The segment covering 696–707 (DTVRRNKKNEKS) has biased composition (basic and acidic residues).

Belongs to the lipase maturation factor family.

The protein resides in the endoplasmic reticulum membrane. In terms of biological role, involved in the maturation of specific proteins in the endoplasmic reticulum. The protein is Lipase maturation factor 2 (lmf2) of Xenopus laevis (African clawed frog).